A 1936-amino-acid chain; its full sequence is Trinucleotide repeat-containing gene 6C protein (1936 aa).

The segment covering 1–31 has biased composition (basic and acidic residues); it reads MEEKKKKKQEEKKKKEGAQKKAADQKTKVPE. Disordered stretches follow at residues 1-160, 181-256, 366-412, 439-931, 961-1063, and 1115-1139; these read MEEK…PTYR, PSIT…NSNG, PQES…AMQT, NGSS…IRRK, VIQS…VAFG, and ESTSSCSSWGNAPKKGLQKGMKTSG. Positions 34 to 44 are enriched in polar residues; the sequence is KTCSSQPQPAG. The span at 45 to 57 shows a compositional bias: low complexity; sequence TSTSTSTSTISSS. The segment covering 58–71 has biased composition (polar residues); the sequence is NNGKRASASGQQPA. Over residues 76 to 88 the composition is skewed to basic and acidic residues; that stretch reads LPREVPPRFRQQE. 2 stretches are compositionally biased toward polar residues: residues 100-111 and 183-217; these read PTGTLTSVSPTQ and ITGTETESASECTTDTDSASNCGSENSSMATGSAQ. Positions 211-1133 are sufficient for interaction with argonaute family proteins; sequence MATGSAQGNF…GNAPKKGLQK (923 aa). Low complexity predominate over residues 218–235; it reads GNFTGHTKKTNGNNGTNG. A compositionally biased stretch (polar residues) spans 366 to 393; sequence PQESTEPQTSTSQNVSFSAQPQNLNTDG. 3 stretches are compositionally biased toward low complexity: residues 394–408, 439–453, and 469–480; these read PNNTNPMNSSPNPIN, NGSSVSQVSGGSAEG, and GNSNSGFSQGNG. The span at 481 to 498 shows a compositional bias: polar residues; it reads DTVNSALSAKQNGSSSAV. The residue at position 523 (Arg523) is an Omega-N-methylarginine. A compositionally biased stretch (polar residues) spans 572–585; that stretch reads GWESPSVTSQNPTV. Positions 594–614 are enriched in low complexity; that stretch reads SWAKAASSGTTASEGSSDGSG. The span at 625–636 shows a compositional bias: basic and acidic residues; the sequence is GTGEGRRRDKGI. A compositionally biased stretch (polar residues) spans 654 to 669; that stretch reads LSNTGWGQTPVKQNTA. A compositionally biased stretch (basic and acidic residues) spans 674–684; the sequence is ESPRSERKNDN. Position 675 is a phosphoserine (Ser675). The span at 694–718 shows a compositional bias: polar residues; the sequence is TQASNSGGKNDGSIMNSTNTSSVSG. Composition is skewed to low complexity over residues 720-730 and 750-772; these read VNAPPAAVPAN and SISSTAVSTAAAAKSGHAWSGAA. Polar residues-rich tracts occupy residues 834–866 and 873–888; these read NRSGSGWNDTTRSGNSGWGNSTNTKANPGTNWG and PQQNWASKPQDNNVSN. Ser924 carries the post-translational modification Phosphoserine. The segment covering 964–982 has biased composition (low complexity); that stretch reads SSTTTNTTTTTTTTTSNTT. A Phosphothreonine modification is found at Thr987. Positions 1021 to 1035 are enriched in polar residues; the sequence is ENSWGEPSSPSTLVD. Positions 1140–1185 constitute a UBA domain; it reads KQDEAWIMSRLIKQLTDMGFPREPAEEALKSNNMNLDQAMSALLEK. Ser1218 is subject to Phosphoserine. 4 disordered regions span residues 1291–1312, 1419–1658, 1689–1732, and 1848–1869; these read AAQARTMQQPPQPPVQPLNSSQ, VKQP…PSSS, STWS…PSST, and TSSWQSSSASSQPRLSAAGSSH. Residues 1388 to 1419 adopt a coiled-coil conformation; it reads MRQQEQQVARTITNLQQQIQQHQRQLAQALLV. The segment covering 1421-1430 has biased composition (pro residues); sequence QPPPPPPPPH. Residues 1467-1936 form a silencing domain; interaction with CNOT1 and PAN3 region; sequence NTFAPYPLAG…PGDLLSGESL (470 aa). The span at 1496-1515 shows a compositional bias: polar residues; that stretch reads DPSQSQSRLPQWTHPNSMDN. A required for interaction with PABPC1 region spans residues 1578–1624; sequence KSDSDKISNGSSINWPPEFHPGVPWKGLQNIDPENDPDVTPGSVPTG. The sufficient for translational repression when tethered to a target mRNA stretch occupies residues 1578-1936; that stretch reads KSDSDKISNG…PGDLLSGESL (359 aa). Positions 1588 to 1606 are PABPC1-interacting motif-2 (PAM2); the sequence is SSINWPPEFHPGVPWKGLQ. A compositionally biased stretch (polar residues) spans 1623–1633; it reads TGPTINTTIQD. Residues 1641-1658 show a composition bias toward low complexity; it reads SGGSSPPSSQNATLPSSS. The segment covering 1689–1703 has biased composition (polar residues); it reads STWSSGPTSHTQASL. The RRM domain occupies 1811 to 1878; sequence AQKSLHMCVL…HGLVRSDAGH (68 aa). An interaction with the CCR4-NOT complex region spans residues 1842 to 1936; that stretch reads GQALPPTSSW…PGDLLSGESL (95 aa). Residues 1848 to 1865 show a composition bias toward low complexity; the sequence is TSSWQSSSASSQPRLSAA.

This sequence belongs to the GW182 family. In terms of assembly, interacts with one or more of the argonaute family proteins AGO1, AGO2, AGO3 and AGO4. Interacts with PABPC1 and EIF4G1. Interacts with CNOT1; the interaction is direct and mediates the association with the CCR4-NOT complex. Interacts with PAN3; the interaction mediates the association with the PAN complex.

Functionally, plays a role in RNA-mediated gene silencing by micro-RNAs (miRNAs). Required for miRNA-dependent translational repression of complementary mRNAs by argonaute family proteins. As scaffoldng protein associates with argonaute proteins bound to partially complementary mRNAs and simultaneously can recruit CCR4-NOT and PAN deadenylase complexes. The polypeptide is Trinucleotide repeat-containing gene 6C protein (TNRC6C) (Homo sapiens (Human)).